The sequence spans 411 residues: Tetra-peptide repeat homeobox protein 1 (411 aa).

Positions serine 3–arginine 24 form a DNA-binding region, homeobox. Disordered stretches follow at residues leucine 20–leucine 63, isoleucine 88–proline 246, proline 286–alanine 340, and leucine 363–leucine 411. Residues glutamine 27–proline 55 show a composition bias toward low complexity. Composition is skewed to pro residues over residues glycine 95–isoleucine 139 and phenylalanine 149–proline 246. Over residues serine 295–glycine 307 the composition is skewed to low complexity. The span at alanine 319 to proline 335 shows a compositional bias: pro residues. Composition is skewed to polar residues over residues serine 366–glutamine 376 and glycine 388–histidine 402.

This sequence belongs to the paired homeobox family.

It localises to the nucleus. Functionally, transcription factor expressed after fertilization required for zygotic genome activation (ZGA), a critical event in early embryonic development during which the developmental control passes from maternally provided mRNAs to the expression of the zygotic genome after fertilization. Binds and activates expression of key ZGA marker genes, such as NANOGNB, ZSCAN4, DUXB, KLF5 and DPPA3. Binds to regulatory DNA sequences containing a 5'-TAATCC-3' sequence motif. The chain is Tetra-peptide repeat homeobox protein 1 from Homo sapiens (Human).